Consider the following 351-residue polypeptide: Nicotinate-nucleotide--dimethylbenzimidazole phosphoribosyltransferase (351 aa).

Glu317 serves as the catalytic Proton acceptor.

Belongs to the CobT family.

It catalyses the reaction 5,6-dimethylbenzimidazole + nicotinate beta-D-ribonucleotide = alpha-ribazole 5'-phosphate + nicotinate + H(+). The protein operates within nucleoside biosynthesis; alpha-ribazole biosynthesis; alpha-ribazole from 5,6-dimethylbenzimidazole: step 1/2. In terms of biological role, catalyzes the synthesis of alpha-ribazole-5'-phosphate from nicotinate mononucleotide (NAMN) and 5,6-dimethylbenzimidazole (DMB). This Pseudomonas aeruginosa (strain LESB58) protein is Nicotinate-nucleotide--dimethylbenzimidazole phosphoribosyltransferase.